Reading from the N-terminus, the 325-residue chain is Biotin synthase (325 aa).

In terms of domain architecture, Radical SAM core spans 43–262 (CSVETAQLLS…VAVARLLMPR (220 aa)). C58, C62, and C65 together coordinate [4Fe-4S] cluster. C102, C133, C193, and R266 together coordinate [2Fe-2S] cluster.

The protein belongs to the radical SAM superfamily. Biotin synthase family. As to quaternary structure, homodimer. Requires [4Fe-4S] cluster as cofactor. [2Fe-2S] cluster serves as cofactor.

The enzyme catalyses (4R,5S)-dethiobiotin + (sulfur carrier)-SH + 2 reduced [2Fe-2S]-[ferredoxin] + 2 S-adenosyl-L-methionine = (sulfur carrier)-H + biotin + 2 5'-deoxyadenosine + 2 L-methionine + 2 oxidized [2Fe-2S]-[ferredoxin]. It functions in the pathway cofactor biosynthesis; biotin biosynthesis; biotin from 7,8-diaminononanoate: step 2/2. Catalyzes the conversion of dethiobiotin (DTB) to biotin by the insertion of a sulfur atom into dethiobiotin via a radical-based mechanism. In Azorhizobium caulinodans (strain ATCC 43989 / DSM 5975 / JCM 20966 / LMG 6465 / NBRC 14845 / NCIMB 13405 / ORS 571), this protein is Biotin synthase.